The sequence spans 467 residues: Argininosuccinate lyase (467 aa).

This sequence belongs to the lyase 1 family. Argininosuccinate lyase subfamily.

Its subcellular location is the cytoplasm. It carries out the reaction 2-(N(omega)-L-arginino)succinate = fumarate + L-arginine. The protein operates within amino-acid biosynthesis; L-arginine biosynthesis; L-arginine from L-ornithine and carbamoyl phosphate: step 3/3. The protein is Argininosuccinate lyase of Anaeromyxobacter dehalogenans (strain 2CP-C).